The primary structure comprises 148 residues: Snaclec 2 (148 aa).

The N-terminal stretch at 1–23 is a signal peptide; the sequence is MGRFIFVSFGLLVVFLSLSGTEA. Disulfide bonds link Cys-27–Cys-38, Cys-55–Cys-144, and Cys-121–Cys-136. The C-type lectin domain maps to 34–145; it reads YDQNCYKAFE…CSGTHSFVCK (112 aa).

Belongs to the snaclec family. Heterodimer; disulfide-linked. In terms of tissue distribution, expressed by the venom gland.

Its subcellular location is the secreted. Interferes with one step of hemostasis (modulation of platelet aggregation, or coagulation cascade, for example). This chain is Snaclec 2, found in Echis ocellatus (Ocellated saw-scaled viper).